The sequence spans 60 residues: Large ribosomal subunit protein bL32c (60 aa).

Belongs to the bacterial ribosomal protein bL32 family.

The protein resides in the plastid. Its subcellular location is the chloroplast. This is Large ribosomal subunit protein bL32c from Psilotum nudum (Whisk fern).